Consider the following 450-residue polypeptide: Zinc finger protein 277 (450 aa).

A2 carries the N-acetylalanine modification. 2 consecutive C2H2-type zinc fingers follow at residues 224–248 and 355–381; these read LQCL…KKQH and HQCR…ETKH.

It belongs to the ZNF277 family. In terms of assembly, interacts (via zinc-finger domains) with RPS2/40S ribosomal protein S2, perhaps as nascent RPS2 is synthesized during translation; the interaction is direct; the interaction is extra-ribosomal. Interaction with RPS2 competes with the binding of RPS2 to protein arginine methyltransferase PRMT3. Interacts with Polycomb group (PcG) complex protein BMI1. May be part of a complex including at least ZNF277, BMI1 and RNF2/RING2.

It is found in the nucleus. In terms of biological role, probable transcription factor. Involved in modulation of cellular senescence; represses transcription of the tumor suppressor gene INK4A/ARF, perhaps acting via the Polycomb group (PcG) complex PRC1. This is Zinc finger protein 277 (ZNF277) from Homo sapiens (Human).